We begin with the raw amino-acid sequence, 65 residues long: Dybowskin-2CDYa (65 aa).

The first 22 residues, 1 to 22, serve as a signal peptide directing secretion; it reads MFTLKKSLLLLFFIGVIKLSLC. Positions 23 to 47 are excised as a propeptide; sequence EEERNADDDERRDDPDEMDVEVENR. Positions 26–43 are enriched in acidic residues; the sequence is RNADDDERRDDPDEMDVE. Residues 26–65 form a disordered region; that stretch reads RNADDDERRDDPDEMDVEVENRSAVGRHGRRFGLRKHRKH. Residues 50–65 show a composition bias toward basic residues; it reads VGRHGRRFGLRKHRKH.

Belongs to the frog skin active peptide (FSAP) family. Brevinin subfamily. In terms of tissue distribution, expressed by the skin glands.

It localises to the secreted. In terms of biological role, antimicrobial peptide. Has activity against the Gram-positive bacterium S.aureus (MIC=6 uM) and the Gram-negative bacterium E.coli (MIC=3 uM). Lacks hemolytic activity against human erythrocytes. The sequence is that of Dybowskin-2CDYa from Rana dybowskii (Dybovsky's frog).